Consider the following 270-residue polypeptide: Bis(5'-nucleosyl)-tetraphosphatase, symmetrical (270 aa).

Belongs to the Ap4A hydrolase family.

The enzyme catalyses P(1),P(4)-bis(5'-adenosyl) tetraphosphate + H2O = 2 ADP + 2 H(+). Its function is as follows. Hydrolyzes diadenosine 5',5'''-P1,P4-tetraphosphate to yield ADP. The sequence is that of Bis(5'-nucleosyl)-tetraphosphatase, symmetrical from Actinobacillus pleuropneumoniae serotype 5b (strain L20).